Reading from the N-terminus, the 358-residue chain is Endo-1,4-beta-xylanase B (358 aa).

The first 17 residues, 1–17 (MRFSASLLLALTGSAAA), serve as a signal peptide directing secretion. One can recognise a GH10 domain in the interval 40–352 (QGLDAAMKAA…KAAYNAFLRG (313 aa)). N136 carries N-linked (GlcNAc...) asparagine glycosylation. E166 (proton donor) is an active-site residue. The Nucleophile role is filled by E274.

The protein belongs to the glycosyl hydrolase 10 (cellulase F) family.

It localises to the secreted. The enzyme catalyses Endohydrolysis of (1-&gt;4)-beta-D-xylosidic linkages in xylans.. It participates in glycan degradation; xylan degradation. Its activity is regulated as follows. Partial inhibition of activity is detected in the presence of Ag(+), Cu2(+) and SDS. Like most fungal xylanases, activity is completely inhibited by Hg(2+) since Hg(2+) could interact with tryptophan residues and oxidize the indole ring. Beta-mercaptoethanol enhances the enzymatic activity by counteracting the oxidation effects of the S-S linkage between cysteine residues. Endo-1,4-beta-xylanase involved in the hydrolysis of xylan, a major structural heterogeneous polysaccharide found in plant biomass representing the second most abundant polysaccharide in the biosphere, after cellulose. Is more active on soluble wheat arabinoxylan (defined as 100%) than on birchwood xylan (75.4%) and beechwood xylan (70.8%), and less active on insoluble wheat arabinoxylan (17.4%). Xylose is the major hydrolysis product of XynB. The sequence is that of Endo-1,4-beta-xylanase B from Humicola insolens (Soft-rot fungus).